The chain runs to 150 residues: Ribonuclease HI (150 aa).

Residues 1 to 141 (MKSINAYTDG…VDVLARGQAM (141 aa)) enclose the RNase H type-1 domain. Residues Asp9, Glu47, Asp69, and Asp133 each contribute to the Mg(2+) site.

It belongs to the RNase H family. As to quaternary structure, monomer. Mg(2+) is required as a cofactor.

It localises to the cytoplasm. The catalysed reaction is Endonucleolytic cleavage to 5'-phosphomonoester.. In terms of biological role, endonuclease that specifically degrades the RNA of RNA-DNA hybrids. The sequence is that of Ribonuclease HI from Xylella fastidiosa (strain 9a5c).